We begin with the raw amino-acid sequence, 830 residues long: MKGYYNFADIEKKWQDKWEKDGLYKTQEETDKDNYYVLEMFPYPSGNLHMGHVRVYSIGDVIARFKRMNGYNVLHPMGWDAFGLPAENAAIKHGNIHPQDWTWDNIKNMKKQMKSLGLSYDWDREVTTAKEDYYKWTQWFFVKMFKKGLAYKKKAAVNWCPGCETVLANEQVVNNACERCGTEVEEKELEQWFFKITNYAERLLEDHKLLQNWPEKVKIMQRNWIGRSEGMRIKFPVKGSSEEIEVFTTRPDTIFGATYMVLAPEHPLVEKLISGTEKEKEVRQFIDRVKKQKEMERTSPESEKEGLFTGAYAINPMTGEEIPIMIANYVLMGYGTGAIMAVPAHDQRDFDFARKYDLPIRVVIQPEEREEELKDTDLNEAYEGSGHLINSDKYNGLTVKEAFDVMAEDMEKEGIGKREVNYRLRDWLISRQRYWGTPIPIVYCEKCGTVPVPEEELPVVLPRDVEFSPTGESPLAKVDEFVNTTCPVCGGKARRETDTMDTFVDSSWYFLRYTDPKNDKLPFSKENAKKWFPVDQYIGGIEHAILHLLYARFFTKVIYDMDMIDSVEPFTNWLAQGMVLKDGAKMSKSKGNVVDPEDILDRFGADTARLFILFAAPPEKDLEWSDRGVEGAERFLNRVWRLVADNIKEIKNTDQASLDVNSFNKNEKDLYRNLHVTIKRVTEDIGERLNFNTAISAIMELTNATYQYLNGVEKVNYTLIKDIIEKMLLILAPFAPHMTEELWSELGNDESIHIQKWPGYEEKALKKDEVTIVVQVNGKVRDKLQVSADIDEDKLKEQVLELPRIQKYTEGKEIVKTIIIPKKLVNIVVK.

Positions 42-52 (PYPSGNLHMGH) match the 'HIGH' region motif. The 'KMSKS' region motif lies at 585–589 (KMSKS). K588 serves as a coordination point for ATP.

It belongs to the class-I aminoacyl-tRNA synthetase family.

The protein resides in the cytoplasm. It catalyses the reaction tRNA(Leu) + L-leucine + ATP = L-leucyl-tRNA(Leu) + AMP + diphosphate. The sequence is that of Leucine--tRNA ligase from Halothermothrix orenii (strain H 168 / OCM 544 / DSM 9562).